The primary structure comprises 119 residues: Auxin-responsive protein SAUR78 (119 aa).

This sequence belongs to the ARG7 family.

Its function is as follows. May be involved in the regulation of ethylene receptor signaling. Promotes cell expansion and plant growth. This Arabidopsis thaliana (Mouse-ear cress) protein is Auxin-responsive protein SAUR78.